We begin with the raw amino-acid sequence, 607 residues long: Homologous recombination OB-fold protein (607 aa).

Disordered regions lie at residues 25–49 (LRPN…SYPA), 84–108 (ISSS…SGRQ), 196–308 (PWPS…TTVT), and 531–581 (LKPP…DDLD). Composition is skewed to polar residues over residues 27-49 (PNSS…SYPA) and 92-108 (QQRM…SGRQ). A Phosphoserine modification is found at Ser-30. Residue Arg-281 is modified to Asymmetric dimethylarginine. Positions 295–308 (SPFSTPRSTSTTVT) are enriched in low complexity. Acidic residues predominate over residues 570 to 581 (PEEELPEADDLD).

As to quaternary structure, interacts with MCM8; this interaction is necessary for MCM8-MCM9 helicase complex recruitment to DNA damage sites. Interacts with RPA1; this interaction associates HROB with the RPA complex.

It is found in the nucleus. The protein localises to the chromosome. DNA-binding protein involved in homologous recombination that acts by recruiting the MCM8-MCM9 helicase complex to sites of DNA damage to promote DNA repair synthesis. This Rattus norvegicus (Rat) protein is Homologous recombination OB-fold protein.